Here is a 110-residue protein sequence, read N- to C-terminus: Insulin (110 aa).

The first 24 residues, M1–A24, serve as a signal peptide directing secretion. Disulfide bonds link C31–C96, C43–C109, and C95–C100. The propeptide at G57–Q87 is c peptide.

This sequence belongs to the insulin family. In terms of assembly, heterodimer of a B chain and an A chain linked by two disulfide bonds.

Its subcellular location is the secreted. Its function is as follows. Insulin decreases blood glucose concentration. It increases cell permeability to monosaccharides, amino acids and fatty acids. It accelerates glycolysis, the pentose phosphate cycle, and glycogen synthesis in liver. This Psammomys obesus (Fat sand rat) protein is Insulin (INS).